We begin with the raw amino-acid sequence, 263 residues long: MKNAFKDALKAGRPQIGLWLGLANSYSAELLAGAGFDWLLIDGEHAPNNVQTVLTQLQAIAPYPSQPVVRPSWNDPVQIKQLLDVGAQTLLIPMVQNADEARNAVAATRYPPAGIRGVGSALARASRWNRIPDYLHQANDAMCVLVQIETREAMSNLASILDVDGIDGVFIGPADLSADMGFAGNPQHPEVQAAIENAIVQIRAAGKAPGILMANEALAKRYLELGALFVAVGVDTTLLARGAEALAARFGVEKKLSGASGVY.

Histidine 45 serves as the catalytic Proton acceptor. Glutamine 147 contacts substrate. Glutamate 149 serves as a coordination point for a divalent metal cation. The substrate site is built by alanine 174 and aspartate 175. Aspartate 175 contributes to the a divalent metal cation binding site.

The protein belongs to the HpcH/HpaI aldolase family. Homohexamer; trimer of dimers. A divalent metal cation is required as a cofactor.

It carries out the reaction 4-hydroxy-2-oxoheptanedioate = succinate semialdehyde + pyruvate. The protein operates within aromatic compound metabolism; 4-hydroxyphenylacetate degradation; pyruvate and succinate semialdehyde from 4-hydroxyphenylacetate: step 7/7. In terms of biological role, catalyzes the reversible retro-aldol cleavage of 4-hydroxy-2-ketoheptane-1,7-dioate (HKHD) to pyruvate and succinic semialdehyde. This chain is 4-hydroxy-2-oxo-heptane-1,7-dioate aldolase, found in Salmonella newport (strain SL254).